Here is a 315-residue protein sequence, read N- to C-terminus: Eukaryotic translation initiation factor 2 subunit 1 (315 aa).

An S1 motif domain is found at glutamate 17–arginine 88. A phosphoserine mark is found at serine 49 and serine 52. The tract at residues arginine 292 to aspartate 315 is disordered. The segment covering glutamate 299–glutamate 308 has biased composition (acidic residues).

The protein belongs to the eIF-2-alpha family. Eukaryotic translation initiation factor 2 eIF2 is a heterotrimeric complex composed of an alpha (EIF2S1), a beta (EIF2S2) and a gamma (EIF2S3) chain. In terms of processing, phosphorylation at Ser-49 and Ser-52 stabilizes the eIF-2/GDP/eIF2B complex and prevents GDP/GTP exchange reaction, thus impairing the recycling of eIF-2 between successive rounds of initiation and leading to global inhibition of translation, while concomitantly initiating the preferential translation of integrated stress response (ISR)-specific mRNAs.

The protein localises to the cytoplasm. The protein resides in the stress granule. It is found in the cytosol. Activity is regulated by phosphorylation at Ser-49 and Ser-52, which stabilizes the eIF2/GDP/eIF2B complex and prevents the eIF2B-mediated exchange of GDP for GTP, thereby preventing the formation of the 43S pre-initiation complex (43S PIC). This results in the global attenuation of 5' cap-dependent protein synthesis and concomitant translation of ISR-specific mRNAs that contain a short upstream open reading frame (uORF) in their 5' UTR. Its function is as follows. Member of the eIF2 complex that functions in the early steps of protein synthesis by forming a ternary complex with GTP and initiator tRNA. This complex binds to a 40S ribosomal subunit, followed by mRNA binding to form a 43S pre-initiation complex. Junction of the 60S ribosomal subunit to form the 80S initiation complex is preceded by hydrolysis of the GTP bound to eIF2 and release of an eIF2-GDP binary complex. In order for eIF2 to recycle and catalyze another round of initiation, the GDP bound to eIF2 must exchange with GTP by way of a reaction catalyzed by eIF2B. EIF2S1/eIF2-alpha is a key component of the integrated stress response (ISR), required for adaptation to various stress: phosphorylation by metabolic-stress sensing protein kinases (EIF2AK1/HRI, EIF2AK2/PKR, EIF2AK3/PERK and EIF2AK4/GCN2) in response to stress converts EIF2S1/eIF2-alpha in a global protein synthesis inhibitor, leading to a attenuation of cap-dependent translation, while concomitantly initiating the preferential translation of ISR-specific mRNAs, such as the transcriptional activators ATF4 and QRICH1. The polypeptide is Eukaryotic translation initiation factor 2 subunit 1 (EIF2S1) (Gallus gallus (Chicken)).